Reading from the N-terminus, the 319-residue chain is ATP-dependent 6-phosphofructokinase (319 aa).

Glycine 11 contributes to the ATP binding site. Position 21–25 (21–25 (RAVVR)) interacts with ADP. ATP contacts are provided by residues 72–73 (RC) and 102–105 (GDGS). Aspartate 103 lines the Mg(2+) pocket. Position 125–127 (125–127 (TID)) interacts with substrate. Catalysis depends on aspartate 127, which acts as the Proton acceptor. Arginine 154 provides a ligand contact to ADP. Substrate contacts are provided by residues arginine 162 and 169–171 (MGR). ADP contacts are provided by residues 185-187 (GAE), arginine 211, and 213-215 (KKH). Substrate-binding positions include glutamate 222, arginine 243, and 249-252 (HVQR).

It belongs to the phosphofructokinase type A (PFKA) family. ATP-dependent PFK group I subfamily. Prokaryotic clade 'B1' sub-subfamily. As to quaternary structure, homotetramer. Requires Mg(2+) as cofactor.

The protein resides in the cytoplasm. The catalysed reaction is beta-D-fructose 6-phosphate + ATP = beta-D-fructose 1,6-bisphosphate + ADP + H(+). The protein operates within carbohydrate degradation; glycolysis; D-glyceraldehyde 3-phosphate and glycerone phosphate from D-glucose: step 3/4. Its activity is regulated as follows. Allosterically activated by ADP and other diphosphonucleosides, and allosterically inhibited by phosphoenolpyruvate. Catalyzes the phosphorylation of D-fructose 6-phosphate to fructose 1,6-bisphosphate by ATP, the first committing step of glycolysis. This chain is ATP-dependent 6-phosphofructokinase, found in Bacillus cereus (strain ATCC 14579 / DSM 31 / CCUG 7414 / JCM 2152 / NBRC 15305 / NCIMB 9373 / NCTC 2599 / NRRL B-3711).